We begin with the raw amino-acid sequence, 307 residues long: Elongation factor Ts (307 aa).

The interval 80–83 (TDFV) is involved in Mg(2+) ion dislocation from EF-Tu.

Belongs to the EF-Ts family.

The protein localises to the cytoplasm. Associates with the EF-Tu.GDP complex and induces the exchange of GDP to GTP. It remains bound to the aminoacyl-tRNA.EF-Tu.GTP complex up to the GTP hydrolysis stage on the ribosome. In Azorhizobium caulinodans (strain ATCC 43989 / DSM 5975 / JCM 20966 / LMG 6465 / NBRC 14845 / NCIMB 13405 / ORS 571), this protein is Elongation factor Ts.